We begin with the raw amino-acid sequence, 493 residues long: UDP-N-acetylmuramoyl-L-alanyl-D-glutamate--2,6-diaminopimelate ligase (493 aa).

Ser30 provides a ligand contact to UDP-N-acetyl-alpha-D-muramoyl-L-alanyl-D-glutamate. An ATP-binding site is contributed by 114–120 (GTNGKTS). UDP-N-acetyl-alpha-D-muramoyl-L-alanyl-D-glutamate-binding positions include 156–157 (TT), Ser183, Gln189, and Arg191. Lys223 carries the post-translational modification N6-carboxylysine. Residues Arg386, 410–413 (DNPR), Gly460, and Glu464 contribute to the meso-2,6-diaminopimelate site. The Meso-diaminopimelate recognition motif signature appears at 410-413 (DNPR).

Belongs to the MurCDEF family. MurE subfamily. Mg(2+) is required as a cofactor. Post-translationally, carboxylation is probably crucial for Mg(2+) binding and, consequently, for the gamma-phosphate positioning of ATP.

It localises to the cytoplasm. It carries out the reaction UDP-N-acetyl-alpha-D-muramoyl-L-alanyl-D-glutamate + meso-2,6-diaminopimelate + ATP = UDP-N-acetyl-alpha-D-muramoyl-L-alanyl-gamma-D-glutamyl-meso-2,6-diaminopimelate + ADP + phosphate + H(+). Its pathway is cell wall biogenesis; peptidoglycan biosynthesis. Catalyzes the addition of meso-diaminopimelic acid to the nucleotide precursor UDP-N-acetylmuramoyl-L-alanyl-D-glutamate (UMAG) in the biosynthesis of bacterial cell-wall peptidoglycan. This Chromobacterium violaceum (strain ATCC 12472 / DSM 30191 / JCM 1249 / CCUG 213 / NBRC 12614 / NCIMB 9131 / NCTC 9757 / MK) protein is UDP-N-acetylmuramoyl-L-alanyl-D-glutamate--2,6-diaminopimelate ligase.